The primary structure comprises 158 residues: 6,7-dimethyl-8-ribityllumazine synthase (158 aa).

5-amino-6-(D-ribitylamino)uracil is bound by residues F23, S61–E63, and A85–I87. Residue E90–T91 coordinates (2S)-2-hydroxy-3-oxobutyl phosphate. The Proton donor role is filled by H93. F118 is a binding site for 5-amino-6-(D-ribitylamino)uracil. R132 is a binding site for (2S)-2-hydroxy-3-oxobutyl phosphate.

Belongs to the DMRL synthase family.

The catalysed reaction is (2S)-2-hydroxy-3-oxobutyl phosphate + 5-amino-6-(D-ribitylamino)uracil = 6,7-dimethyl-8-(1-D-ribityl)lumazine + phosphate + 2 H2O + H(+). It participates in cofactor biosynthesis; riboflavin biosynthesis; riboflavin from 2-hydroxy-3-oxobutyl phosphate and 5-amino-6-(D-ribitylamino)uracil: step 1/2. In terms of biological role, catalyzes the formation of 6,7-dimethyl-8-ribityllumazine by condensation of 5-amino-6-(D-ribitylamino)uracil with 3,4-dihydroxy-2-butanone 4-phosphate. This is the penultimate step in the biosynthesis of riboflavin. This chain is 6,7-dimethyl-8-ribityllumazine synthase, found in Prochlorococcus marinus (strain MIT 9215).